A 446-amino-acid chain; its full sequence is Phosphoglucosamine mutase (446 aa).

Ser101 (phosphoserine intermediate) is an active-site residue. Residues Ser101, Asp240, Asp242, and Asp244 each contribute to the Mg(2+) site. Phosphoserine is present on Ser101.

The protein belongs to the phosphohexose mutase family. Mg(2+) is required as a cofactor. In terms of processing, activated by phosphorylation.

The enzyme catalyses alpha-D-glucosamine 1-phosphate = D-glucosamine 6-phosphate. Its function is as follows. Catalyzes the conversion of glucosamine-6-phosphate to glucosamine-1-phosphate. The protein is Phosphoglucosamine mutase of Coxiella burnetii (strain Dugway 5J108-111).